The sequence spans 242 residues: Uridylate kinase (242 aa).

Lys-17 to Gly-20 contacts ATP. Gly-59 lines the UMP pocket. 2 residues coordinate ATP: Gly-60 and Arg-64. Residues Asp-79 and Thr-140–Thr-147 contribute to the UMP site. Residues Thr-167, Tyr-173, and Asp-176 each contribute to the ATP site.

It belongs to the UMP kinase family. Homohexamer.

It is found in the cytoplasm. The enzyme catalyses UMP + ATP = UDP + ADP. It functions in the pathway pyrimidine metabolism; CTP biosynthesis via de novo pathway; UDP from UMP (UMPK route): step 1/1. With respect to regulation, inhibited by UTP. Its function is as follows. Catalyzes the reversible phosphorylation of UMP to UDP. The polypeptide is Uridylate kinase (Marinobacter nauticus (strain ATCC 700491 / DSM 11845 / VT8) (Marinobacter aquaeolei)).